We begin with the raw amino-acid sequence, 99 residues long: Integration host factor subunit alpha (99 aa).

The protein belongs to the bacterial histone-like protein family. Heterodimer of an alpha and a beta chain.

In terms of biological role, this protein is one of the two subunits of integration host factor, a specific DNA-binding protein that functions in genetic recombination as well as in transcriptional and translational control. This Alteromonas mediterranea (strain DSM 17117 / CIP 110805 / LMG 28347 / Deep ecotype) protein is Integration host factor subunit alpha.